The chain runs to 525 residues: BTB/POZ domain-containing protein At1g50280 (525 aa).

The BTB domain occupies 5–79 (NDLKINLNGQ…CYHNGEILID (75 aa)). The region spanning 200-466 (EWWFEDMTNL…IEALKSRCGN (267 aa)) is the NPH3 domain.

This sequence belongs to the NPH3 family.

It participates in protein modification; protein ubiquitination. In terms of biological role, may act as a substrate-specific adapter of an E3 ubiquitin-protein ligase complex (CUL3-RBX1-BTB) which mediates the ubiquitination and subsequent proteasomal degradation of target proteins. The sequence is that of BTB/POZ domain-containing protein At1g50280 from Arabidopsis thaliana (Mouse-ear cress).